Consider the following 205-residue polypeptide: GTP cyclohydrolase 1 (205 aa).

Zn(2+) is bound by residues Cys94, His97, and Cys165.

The protein belongs to the GTP cyclohydrolase I family. In terms of assembly, homomer.

The catalysed reaction is GTP + H2O = 7,8-dihydroneopterin 3'-triphosphate + formate + H(+). The protein operates within cofactor biosynthesis; 7,8-dihydroneopterin triphosphate biosynthesis; 7,8-dihydroneopterin triphosphate from GTP: step 1/1. This Sinorhizobium fredii (strain NBRC 101917 / NGR234) protein is GTP cyclohydrolase 1.